The following is a 294-amino-acid chain: Tyrosine recombinase XerC (294 aa).

The region spanning 1–85 (MSRLVEDFFA…ACRGFYTWLV (85 aa)) is the Core-binding (CB) domain. The Tyr recombinase domain maps to 106–283 (KLPRILDADE…DFQYLSKVYD (178 aa)). Catalysis depends on residues Arg145, Lys169, His235, Arg238, and His261. Residue Tyr270 is the O-(3'-phospho-DNA)-tyrosine intermediate of the active site.

It belongs to the 'phage' integrase family. XerC subfamily. In terms of assembly, forms a cyclic heterotetrameric complex composed of two molecules of XerC and two molecules of XerD.

It is found in the cytoplasm. Site-specific tyrosine recombinase, which acts by catalyzing the cutting and rejoining of the recombining DNA molecules. The XerC-XerD complex is essential to convert dimers of the bacterial chromosome into monomers to permit their segregation at cell division. It also contributes to the segregational stability of plasmids. The chain is Tyrosine recombinase XerC from Xylella fastidiosa (strain M23).